Reading from the N-terminus, the 222-residue chain is 23kDa protein (222 aa).

The segment covering 1 to 12 (MEPHDQSGSTTR) has biased composition (polar residues). The segment at 1–21 (MEPHDQSGSTTRQLDEIRDRR) is disordered.

Its function is as follows. May act as a regulatory factor during viral transcription. The chain is 23kDa protein from Indian citrus ringspot virus (isolate Kinnow mandarin/India/K1/1996) (ICRSV).